The chain runs to 231 residues: Probable transglycosylase SceD (231 aa).

An N-terminal signal peptide occupies residues 1–27; it reads MKKTLLASSLAVGLGIVAGNAGHEAHA. The disordered stretch occupies residues 93–153; that stretch reads SAQAPATNNV…ESKASEGSSV (61 aa). The segment covering 96-116 has biased composition (polar residues); the sequence is APATNNVAPSADQANQVQSQE. Residues 119–137 show a composition bias toward low complexity; it reads APQNAQTQQPQASTSNNSQ. Polar residues predominate over residues 138–153; it reads VTATPTESKASEGSSV.

This sequence belongs to the transglycosylase family. SceD subfamily.

The protein localises to the secreted. Functionally, is able to cleave peptidoglycan and affects clumping and separation of bacterial cells. This is Probable transglycosylase SceD (sceD) from Staphylococcus aureus (strain bovine RF122 / ET3-1).